Reading from the N-terminus, the 456-residue chain is Bifunctional protein GlmU (456 aa).

Residues 1-229 are pyrophosphorylase; sequence MLNSAMSVVI…ISETDGVNNR (229 aa). Residues 11–14, Lys25, Gln76, 81–82, 103–105, Gly140, Glu154, Asn169, and Asn227 each bind UDP-N-acetyl-alpha-D-glucosamine; these read LAAG, GT, and YGD. Asp105 is a binding site for Mg(2+). A Mg(2+)-binding site is contributed by Asn227. The tract at residues 230–250 is linker; sequence LQLSRLERIYQAEQAEKLLLS. The interval 251 to 456 is N-acetyltransferase; the sequence is GVMLRDPARF…QGWQRPVKKK (206 aa). UDP-N-acetyl-alpha-D-glucosamine-binding residues include Arg333 and Lys351. His363 acts as the Proton acceptor in catalysis. Tyr366 and Asn377 together coordinate UDP-N-acetyl-alpha-D-glucosamine. Acetyl-CoA contacts are provided by residues Ala380, 386–387, Ser405, Ala423, and Arg440; that span reads NY.

It in the N-terminal section; belongs to the N-acetylglucosamine-1-phosphate uridyltransferase family. This sequence in the C-terminal section; belongs to the transferase hexapeptide repeat family. As to quaternary structure, homotrimer. Requires Mg(2+) as cofactor.

It is found in the cytoplasm. It carries out the reaction alpha-D-glucosamine 1-phosphate + acetyl-CoA = N-acetyl-alpha-D-glucosamine 1-phosphate + CoA + H(+). It catalyses the reaction N-acetyl-alpha-D-glucosamine 1-phosphate + UTP + H(+) = UDP-N-acetyl-alpha-D-glucosamine + diphosphate. It participates in nucleotide-sugar biosynthesis; UDP-N-acetyl-alpha-D-glucosamine biosynthesis; N-acetyl-alpha-D-glucosamine 1-phosphate from alpha-D-glucosamine 6-phosphate (route II): step 2/2. Its pathway is nucleotide-sugar biosynthesis; UDP-N-acetyl-alpha-D-glucosamine biosynthesis; UDP-N-acetyl-alpha-D-glucosamine from N-acetyl-alpha-D-glucosamine 1-phosphate: step 1/1. The protein operates within bacterial outer membrane biogenesis; LPS lipid A biosynthesis. Its function is as follows. Catalyzes the last two sequential reactions in the de novo biosynthetic pathway for UDP-N-acetylglucosamine (UDP-GlcNAc). The C-terminal domain catalyzes the transfer of acetyl group from acetyl coenzyme A to glucosamine-1-phosphate (GlcN-1-P) to produce N-acetylglucosamine-1-phosphate (GlcNAc-1-P), which is converted into UDP-GlcNAc by the transfer of uridine 5-monophosphate (from uridine 5-triphosphate), a reaction catalyzed by the N-terminal domain. The protein is Bifunctional protein GlmU of Salmonella schwarzengrund (strain CVM19633).